A 298-amino-acid chain; its full sequence is MIRVACVGITVMDRIYYVEGLPTESGKYVARNYTEVGGGPAATAAVAAARLGAQVDFIGRVGDDDTGNSLLAELESWGVNTRYTKRYNQAKSSQSAIMVDTKGERIIINYPSPDLLPDAEWLEEIDFSQWDVVLADVRWHDGAKKAFTLARQAGVMTVLDGDITPQDISELVALSDHAAFSEPGLARLTGVKEMASALKQAQTLTNGHVYVTQGSAGCDWLENGGRQHQPAFKVDVVDTTGAGDVFHGALAVALATSGDLAESVRFASGVAALKCTRPGGRAGIPDCDQTRSFLSLFV.

6-deoxy-6-sulfo-D-fructose contacts are provided by Asp13, Lys27, Gly39, Ser95, and Arg138. Residues Thr212, Gly214, Gly217, and Gly243 each coordinate ATP. A 6-deoxy-6-sulfo-D-fructose-binding site is contributed by Asp244.

Belongs to the carbohydrate kinase PfkB family. Homodimer.

The catalysed reaction is 6-deoxy-6-sulfo-D-fructose + ATP = 6-deoxy-6-sulfo-D-fructose 1-phosphate + ADP + H(+). Strongly inhibited by ADP. Activated by sulfoquinovose (SQ), sulfolactaldehyde (SLA) and dihydroxyacetone phosphate (DHAP) (through effects on KM) and by fructose 6-phosphate (F6P), fructose bisphosphate (FBP), phosphoenolpyruvate (PEP) and citrate (through effects on kcat/KM). In terms of biological role, phosphorylates 6-deoxy-6-sulfo-D-fructose (SF) to 6-deoxy-6-sulfo-D-fructose 1-phosphate (SFP). Cannot phosphorylate fructose 6-phosphate. The protein is Sulfofructose kinase (yihV) of Escherichia coli (strain K12).